The chain runs to 353 residues: GDP-mannose transporter (353 aa).

Topologically, residues 1 to 31 (MGLLLSYLFGYIFYSVNKKFHIMEKFGASNS) are cytoplasmic. The helical transmembrane segment at 32–52 (IVNNGPVSIFAYCASSILMTV) threads the bilayer. The Lumenal segment spans residues 53–66 (TNKFVVGAYEFNLN). The helical transmembrane segment at 67-87 (FFLLAVQAAVCLVTIATLKGL) threads the bilayer. Residues 88–102 (GIITYRQFNKDEAKK) are Cytoplasmic-facing. The chain crosses the membrane as a helical span at residues 103–122 (WFPIAFLLVLMIYTSSKALQ). The Lumenal portion of the chain corresponds to 123-125 (YLS). A helical membrane pass occupies residues 126–148 (IPVYTIFKNLTIILIAYGEVIWF). Topologically, residues 149–154 (GGKVTT) are cytoplasmic. The helical transmembrane segment at 155–172 (MALGSFILMVLSSVIAYY) threads the bilayer. Residues 173–187 (GDTAETGEKTAEMHL) are Lumenal-facing. Residues 188–208 (LYLGYAWMFTNCFSSAAFVLI) form a helical membrane-spanning segment. At 209-227 (MRKRIKLTNFKDFDTMYYN) the chain is on the cytoplasmic side. The chain crosses the membrane as a helical span at residues 228-248 (NLLSLPLLLVFSFLFEDWSSV). The Lumenal segment spans residues 249 to 262 (NLNKNFPPDNRNTT). The N-linked (GlcNAc...) asparagine glycan is linked to N260. Residues 263-283 (IFVMILSGASSVGISYCSAWC) traverse the membrane as a helical segment. The Cytoplasmic portion of the chain corresponds to 284-290 (VRVTSST). A helical transmembrane segment spans residues 291–313 (TYSMVGALNKLPIALSGLVFFNA). Residues 314–316 (AVN) are Lumenal-facing. Residues 317–336 (FWSVSSIFVGFLAGVFYAVA) traverse the membrane as a helical segment. Residues 337 to 353 (KQKQQKENAQQLPVANK) lie on the Cytoplasmic side of the membrane.

This sequence belongs to the TPT transporter family. SLC35D subfamily. Homooligomer.

It is found in the golgi apparatus membrane. Its subcellular location is the cytoplasmic vesicle membrane. It localises to the endoplasmic reticulum membrane. Functionally, involved in the import of GDP-mannose from the cytoplasm into the Golgi lumen. The protein is GDP-mannose transporter (VRG4) of Meyerozyma guilliermondii (strain ATCC 6260 / CBS 566 / DSM 6381 / JCM 1539 / NBRC 10279 / NRRL Y-324) (Yeast).